The primary structure comprises 172 residues: Translation initiation factor IF-3 (172 aa).

It belongs to the IF-3 family. As to quaternary structure, monomer.

It is found in the cytoplasm. Its function is as follows. IF-3 binds to the 30S ribosomal subunit and shifts the equilibrium between 70S ribosomes and their 50S and 30S subunits in favor of the free subunits, thus enhancing the availability of 30S subunits on which protein synthesis initiation begins. The chain is Translation initiation factor IF-3 from Lactobacillus johnsonii (strain CNCM I-12250 / La1 / NCC 533).